The sequence spans 218 residues: THAP domain-containing protein 3 (218 aa).

The THAP-type zinc finger occupies 1 to 82 (MPKSCAARQC…LKHNAVPTVF (82 aa)). Disordered stretches follow at residues 97 to 120 (GGDS…PEGP) and 133 to 154 (ATEA…PGQP). Ser-100 carries the phosphoserine modification. The HCFC1-binding motif (HBM) signature appears at 156–159 (DHSY).

Component of a THAP1/THAP3-HCFC1-OGT complex that contains at least, either THAP1 or THAP3, HCFC1 and OGT. Interacts directly with OGT and HCFC1 (via its HBM). Highest levels in heart, liver and kidney. Lower levels in brain and lung.

Component of a THAP1/THAP3-HCFC1-OGT complex that is required for the regulation of the transcriptional activity of RRM1. The chain is THAP domain-containing protein 3 (Thap3) from Mus musculus (Mouse).